The following is a 651-amino-acid chain: J domain-containing protein required for chloroplast accumulation response 1 (651 aa).

Over residues 1 to 17 (MQTLPSSETVLLGSNSA) the composition is skewed to polar residues. Disordered stretches follow at residues 1–56 (MQTL…TRHS), 114–138 (GSRILSPAHKPESSSGTSSPSQFSL), 156–176 (LNKNKETVSSSPLSRTSSKAD), 250–291 (KLGK…TDLK), and 308–526 (KPLD…IDEP). Ser-56 carries the post-translational modification Phosphoserine. Low complexity predominate over residues 126 to 137 (SSSGTSSPSQFS). Basic and acidic residues-rich tracts occupy residues 250 to 259 (KLGKNEEGDG), 281 to 291 (TKEEKTETDLK), 337 to 357 (IFHEEDERQDEKIVSEREVRK), 405 to 416 (VGKDGVKGKVSD), 441 to 456 (RAKETPKTDIIHDGSN), and 488 to 497 (QKKDSDRESM). The stretch at 532 to 562 (DVEDITQDENKMEEANKDAEEIKNIDAKIRK) forms a coiled coil. In terms of domain architecture, J spans 586–651 (SGWKPVPLMD…WDHFNTLGPV (66 aa)).

Expressed in leaves and stems, but not in roots.

Its subcellular location is the cytoplasm. In terms of biological role, required for chloroplast photorelocation movement; chloroplast accumulation upon low blue light and for chloroplast movement to the bottom of cells in darkness, by modulating chloroplast actin (Cp-actin) filaments distribution, appearance and disappearance. May mediate a slight resistance to aluminum in root hair cells. This chain is J domain-containing protein required for chloroplast accumulation response 1 (JAC1), found in Arabidopsis thaliana (Mouse-ear cress).